A 100-amino-acid chain; its full sequence is Guanine nucleotide exchange factor MSS4 homolog (100 aa).

One can recognise an MSS4 domain in the interval 1-100 (MSNLRIVCQH…YLLLCSLEKN (100 aa)). Zn(2+) contacts are provided by Cys-8, Cys-11, Cys-73, and Cys-76.

This sequence belongs to the DSS4/MSS4 family.

Guanine-nucleotide-releasing protein that acts on members of the sec4/ypt1/rab subfamily. This is Guanine nucleotide exchange factor MSS4 homolog from Schizosaccharomyces pombe (strain 972 / ATCC 24843) (Fission yeast).